We begin with the raw amino-acid sequence, 411 residues long: 1-deoxy-D-xylulose 5-phosphate reductoisomerase (411 aa).

Positions 12, 13, 14, 15, and 127 each coordinate NADPH. Residue Lys-128 participates in 1-deoxy-D-xylulose 5-phosphate binding. Glu-129 lines the NADPH pocket. Residue Asp-153 coordinates Mn(2+). 1-deoxy-D-xylulose 5-phosphate is bound by residues Ser-154, Glu-155, Ser-189, and His-212. Glu-155 is a Mn(2+) binding site. An NADPH-binding site is contributed by Gly-218. The 1-deoxy-D-xylulose 5-phosphate site is built by Ser-225, Asn-230, Lys-231, and Glu-234. Glu-234 provides a ligand contact to Mn(2+).

Belongs to the DXR family. Requires Mg(2+) as cofactor. Mn(2+) serves as cofactor.

It carries out the reaction 2-C-methyl-D-erythritol 4-phosphate + NADP(+) = 1-deoxy-D-xylulose 5-phosphate + NADPH + H(+). Its pathway is isoprenoid biosynthesis; isopentenyl diphosphate biosynthesis via DXP pathway; isopentenyl diphosphate from 1-deoxy-D-xylulose 5-phosphate: step 1/6. Its function is as follows. Catalyzes the NADPH-dependent rearrangement and reduction of 1-deoxy-D-xylulose-5-phosphate (DXP) to 2-C-methyl-D-erythritol 4-phosphate (MEP). This is 1-deoxy-D-xylulose 5-phosphate reductoisomerase from Colwellia psychrerythraea (strain 34H / ATCC BAA-681) (Vibrio psychroerythus).